The sequence spans 128 residues: Con-Ins F2b (128 aa).

Residues 1–24 (MTTSSYFLLVALGLLLYVCRSSFG) form the signal peptide. 4 disulfide bridges follow: Cys-29-Cys-104, Cys-41-Cys-107, Cys-53-Cys-120, and Cys-106-Cys-111. The propeptide at 59–89 (LQGGTGKKRGRASLLRKRRAFLSMLKARAKR) is c peptide. The residue at position 115 (Glu-115) is a 4-carboxyglutamate; partial. Position 127 is a serine amide (Ser-127).

This sequence belongs to the insulin family. In terms of assembly, heterodimer of A and B chains; disulfide-linked. As to expression, expressed by the venom gland.

The protein localises to the secreted. Its function is as follows. This venom insulin facilitates prey capture by rapidly inducing hypoglycemic shock. Intraperitoneal injection of this peptide into zebrafish lowers blood glucose with the same potency than human insulin. In vivo, when applied to water, this peptide reduces overall locomotor activity of zebrafish larvae, observed as a significant decrease in the percentage of time spent swimming and movement frequency. The protein is Con-Ins F2b of Conus floridulus (Cone snail).